The chain runs to 346 residues: Isopentenyl-diphosphate delta-isomerase (346 aa).

12–13 (RK) serves as a coordination point for substrate. Residues 67 to 69 (ALT), S97, and N126 contribute to the FMN site. Position 97-99 (97-99 (SQR)) interacts with substrate. Q156 lines the substrate pocket. E157 provides a ligand contact to Mg(2+). FMN-binding positions include K188, T218, 263-265 (GIR), and 284-285 (AG).

This sequence belongs to the IPP isomerase type 2 family. Homooctamer. Dimer of tetramers. FMN is required as a cofactor. Requires NADPH as cofactor. Mg(2+) serves as cofactor.

It is found in the cytoplasm. It carries out the reaction isopentenyl diphosphate = dimethylallyl diphosphate. Functionally, involved in the biosynthesis of isoprenoids. Catalyzes the 1,3-allylic rearrangement of the homoallylic substrate isopentenyl (IPP) to its allylic isomer, dimethylallyl diphosphate (DMAPP). The protein is Isopentenyl-diphosphate delta-isomerase of Moorella thermoacetica (strain ATCC 39073 / JCM 9320).